The primary structure comprises 392 residues: Tryptophan synthase beta chain 1 (392 aa).

At K85 the chain carries N6-(pyridoxal phosphate)lysine.

Belongs to the TrpB family. In terms of assembly, tetramer of two alpha and two beta chains. The cofactor is pyridoxal 5'-phosphate.

The catalysed reaction is (1S,2R)-1-C-(indol-3-yl)glycerol 3-phosphate + L-serine = D-glyceraldehyde 3-phosphate + L-tryptophan + H2O. Its pathway is amino-acid biosynthesis; L-tryptophan biosynthesis; L-tryptophan from chorismate: step 5/5. In terms of biological role, the beta subunit is responsible for the synthesis of L-tryptophan from indole and L-serine. This is Tryptophan synthase beta chain 1 (trpB1) from Methanothermobacter thermautotrophicus (strain ATCC 29096 / DSM 1053 / JCM 10044 / NBRC 100330 / Delta H) (Methanobacterium thermoautotrophicum).